We begin with the raw amino-acid sequence, 525 residues long: Mannuronan C5-epimerase AlgG (525 aa).

Positions 1 to 29 (MNVQRKLASTQLKPVLLGVLLATSAWSQA) are cleaved as a signal peptide. 5 PbH1 repeats span residues 287-309 (ADDV…DPHD), 311-334 (SERL…IVSR), 336-358 (VNNS…VLDR), 360-382 (SEHN…TLYE), and 383-405 (SSNN…RMRN). His-308 functions as the Proton acceptor in the catalytic mechanism.

It belongs to the D-mannuronate C5-epimerase family.

It is found in the periplasm. The enzyme catalyses [(1-&gt;4)-beta-D-mannuronosyl](n) = [alginate](n). Its pathway is glycan biosynthesis; alginate biosynthesis. With respect to regulation, inhibited by zinc. Functionally, catalyzes the epimerization of beta-D-mannuronate to alpha-L-guluronate during the synthesis of the linear polysaccharide alginate. In addition, is part of a periplasmic protein complex that protects alginate from degradation by AlgL by channeling the newly formed alginate polymer through a scaffold that transfers the alginate polymer through the periplasmic space to the outer membrane secretin AlgE. This Azotobacter vinelandii protein is Mannuronan C5-epimerase AlgG.